Here is a 131-residue protein sequence, read N- to C-terminus: Glycine cleavage system H protein (131 aa).

One can recognise a Lipoyl-binding domain in the interval 24–106 (IATLGISAFA…HGEGWLLKVR (83 aa)). K65 is subject to N6-lipoyllysine.

This sequence belongs to the GcvH family. As to quaternary structure, the glycine cleavage system is composed of four proteins: P, T, L and H. The cofactor is (R)-lipoate.

In terms of biological role, the glycine cleavage system catalyzes the degradation of glycine. The H protein shuttles the methylamine group of glycine from the P protein to the T protein. In Microcystis aeruginosa (strain NIES-843 / IAM M-2473), this protein is Glycine cleavage system H protein.